The following is a 134-amino-acid chain: Small ribosomal subunit protein uS8c (134 aa).

This sequence belongs to the universal ribosomal protein uS8 family. As to quaternary structure, part of the 30S ribosomal subunit.

Its subcellular location is the plastid. Functionally, one of the primary rRNA binding proteins, it binds directly to 16S rRNA central domain where it helps coordinate assembly of the platform of the 30S subunit. The protein is Small ribosomal subunit protein uS8c (rps8) of Cuscuta obtusiflora (Peruvian dodder).